Here is a 44-residue protein sequence, read N- to C-terminus: U9-ctenitoxin-Co1a (44 aa).

Cystine bridges form between Cys-3–Cys-17, Cys-10–Cys-23, Cys-16–Cys-33, and Cys-25–Cys-31.

Expressed by the venom gland.

The protein resides in the secreted. Its function is as follows. Insecticidal neurotoxin that reversibly inhibits the N-methyl-D-aspartate (NMDA)-subtype of ionotropic glutamate receptor (GRIN) and inhibits inactivation of insect sodium channels (Nav). In vivo, is highly toxic to insects. This is U9-ctenitoxin-Co1a from Ctenus ornatus (Brazilian spider).